A 206-amino-acid polypeptide reads, in one-letter code: Large ribosomal subunit protein uL4 (206 aa).

Positions 47–77 (TRAQKGRSDVTGSTRKQWRQKGTGRARTGAA) are disordered.

The protein belongs to the universal ribosomal protein uL4 family. In terms of assembly, part of the 50S ribosomal subunit.

One of the primary rRNA binding proteins, this protein initially binds near the 5'-end of the 23S rRNA. It is important during the early stages of 50S assembly. It makes multiple contacts with different domains of the 23S rRNA in the assembled 50S subunit and ribosome. In terms of biological role, forms part of the polypeptide exit tunnel. The chain is Large ribosomal subunit protein uL4 from Nitrosomonas europaea (strain ATCC 19718 / CIP 103999 / KCTC 2705 / NBRC 14298).